The following is a 308-amino-acid chain: AGFYVDGNTLYDANGQPFVMRGINHGHAWYKDTASTAIPAIAEQGANTIRIVLSDGGQWEKDDIDTIREVIELAEQNKMVAVVEVHDATGRDSRSDLNRAVDYWIEMKDALIGKEDTVIINIANEWYGSWDGSAWADGYIDVIPKLRDAGLTHTLMVDAAGWGQYPQSIHDYGQDVFNADPLKNTMFSIHMYEYAGGDANTVRSNIDRVIDQDLALVIGEFGHRHTDGDVDEDTILSYSEETGTGWLAWSWKGNSTEWDYLDLSEDWAGQHLTDWGNRIVHGADGLQETSKPSTVFTDDNGGHPEPPT.

The active-site Proton donor is Glu125. The active-site Nucleophile is the Glu220. Residues 284 to 308 (DGLQETSKPSTVFTDDNGGHPEPPT) are disordered. The segment covering 287–297 (QETSKPSTVFT) has biased composition (polar residues).

The protein belongs to the glycosyl hydrolase 5 (cellulase A) family.

The enzyme catalyses Random hydrolysis of (1-&gt;4)-beta-D-mannosidic linkages in mannans, galactomannans and glucomannans.. In terms of biological role, catalyzes the endo hydrolysis of beta-1,4-linked mannan, galactomannan and glucomannan. It is able to hydrolyze mannosidic linkages that are flanked by mannose or glucose. The protein is Mannan endo-1,4-beta-mannosidase of Salipaludibacillus agaradhaerens (Bacillus agaradhaerens).